The following is a 1900-amino-acid chain: Phosphatidylinositol 4-kinase STT4 (1900 aa).

Ser459 bears the Phosphoserine mark. The region spanning 1345-1530 is the PIK helical domain; that stretch reads KIEGADSNEL…KPTLDRIRER (186 aa). The segment at 1531-1648 is pleckstrin homology (PH) domain conferring phosphoinositide binding specificity; sequence MVSSFSQSHR…EKWQAAIFKV (118 aa). A PI3K/PI4K catalytic domain is found at 1617 to 1884; the sequence is FMATFKIKKD…LIRKSYESIF (268 aa). The segment at 1623–1629 is G-loop; the sequence is IKKDVKD. Residues 1751–1759 form a catalytic loop region; sequence QFKDRHNGN. The tract at residues 1770-1794 is activation loop; the sequence is HIDFGFIFDIVPGGIKFEAVPFKLT.

The protein belongs to the PI3/PI4-kinase family. Type III PI4K subfamily.

The catalysed reaction is a 1,2-diacyl-sn-glycero-3-phospho-(1D-myo-inositol) + ATP = a 1,2-diacyl-sn-glycero-3-phospho-(1D-myo-inositol 4-phosphate) + ADP + H(+). Functionally, acts on phosphatidylinositol (PI) in the first committed step in the production of the second messenger inositol 1,4,5,-trisphosphate. STT4 functions in PKC1 protein kinase pathway. The protein is Phosphatidylinositol 4-kinase STT4 (STT4) of Saccharomyces cerevisiae (strain ATCC 204508 / S288c) (Baker's yeast).